The following is a 487-amino-acid chain: Malonate-semialdehyde dehydrogenase 2 (487 aa).

NAD(+) contacts are provided by phenylalanine 154, lysine 178, glutamate 181, arginine 182, and serine 231. Cysteine 286 acts as the Nucleophile in catalysis. Glutamate 386 lines the NAD(+) pocket.

The protein belongs to the aldehyde dehydrogenase family. IolA subfamily. As to quaternary structure, homotetramer.

The catalysed reaction is 3-oxopropanoate + NAD(+) + CoA + H2O = hydrogencarbonate + acetyl-CoA + NADH + H(+). It carries out the reaction 2-methyl-3-oxopropanoate + NAD(+) + CoA + H2O = propanoyl-CoA + hydrogencarbonate + NADH + H(+). Its pathway is polyol metabolism; myo-inositol degradation into acetyl-CoA; acetyl-CoA from myo-inositol: step 7/7. Its function is as follows. Catalyzes the oxidation of malonate semialdehyde (MSA) and methylmalonate semialdehyde (MMSA) into acetyl-CoA and propanoyl-CoA, respectively. Is involved in a myo-inositol catabolic pathway. Bicarbonate, and not CO2, is the end-product of the enzymatic reaction. The protein is Malonate-semialdehyde dehydrogenase 2 of Bacillus thuringiensis (strain Al Hakam).